The primary structure comprises 226 residues: 2,3-bisphosphoglycerate-dependent phosphoglycerate mutase (226 aa).

Residues arginine 8–asparagine 15, threonine 21–glycine 22, arginine 58, glutamate 109–tyrosine 112, lysine 120, arginine 136–arginine 137, and glycine 180–asparagine 181 each bind substrate. Histidine 9 acts as the Tele-phosphohistidine intermediate in catalysis. The Proton donor/acceptor role is filled by glutamate 109.

It belongs to the phosphoglycerate mutase family. BPG-dependent PGAM subfamily.

The enzyme catalyses (2R)-2-phosphoglycerate = (2R)-3-phosphoglycerate. The protein operates within carbohydrate degradation; glycolysis; pyruvate from D-glyceraldehyde 3-phosphate: step 3/5. Its function is as follows. Catalyzes the interconversion of 2-phosphoglycerate and 3-phosphoglycerate. In Chlamydia trachomatis serovar L2b (strain UCH-1/proctitis), this protein is 2,3-bisphosphoglycerate-dependent phosphoglycerate mutase.